Reading from the N-terminus, the 307-residue chain is Aspartate carbamoyltransferase catalytic subunit (307 aa).

2 residues coordinate carbamoyl phosphate: Arg55 and Thr56. Lys85 contacts L-aspartate. The carbamoyl phosphate site is built by Arg106, His134, and Gln137. Residues Arg167 and Arg228 each contribute to the L-aspartate site. 2 residues coordinate carbamoyl phosphate: Leu266 and Pro267.

This sequence belongs to the aspartate/ornithine carbamoyltransferase superfamily. ATCase family. Heterododecamer (2C3:3R2) of six catalytic PyrB chains organized as two trimers (C3), and six regulatory PyrI chains organized as three dimers (R2).

The enzyme catalyses carbamoyl phosphate + L-aspartate = N-carbamoyl-L-aspartate + phosphate + H(+). It participates in pyrimidine metabolism; UMP biosynthesis via de novo pathway; (S)-dihydroorotate from bicarbonate: step 2/3. Functionally, catalyzes the condensation of carbamoyl phosphate and aspartate to form carbamoyl aspartate and inorganic phosphate, the committed step in the de novo pyrimidine nucleotide biosynthesis pathway. In Tolumonas auensis (strain DSM 9187 / NBRC 110442 / TA 4), this protein is Aspartate carbamoyltransferase catalytic subunit.